Here is a 696-residue protein sequence, read N- to C-terminus: Translation factor waclaw, mitochondrial (696 aa).

The N-terminal 76 residues, Met-1–Lys-76, are a transit peptide targeting the mitochondrion. The region spanning Glu-97–Gln-278 is the tr-type G domain. Residues Ala-106 to Ser-113, Asp-171 to His-175, and Asn-225 to Asp-228 contribute to the GTP site.

This sequence belongs to the TRAFAC class translation factor GTPase superfamily. Classic translation factor GTPase family. LepA subfamily.

Its subcellular location is the mitochondrion inner membrane. It carries out the reaction GTP + H2O = GDP + phosphate + H(+). Its function is as follows. Promotes mitochondrial protein synthesis. May act as a fidelity factor of the translation reaction, by catalyzing a one-codon backward translocation of tRNAs on improperly translocated ribosomes. Binds to mitochondrial ribosomes in a GTP-dependent manner. The chain is Translation factor waclaw, mitochondrial from Drosophila melanogaster (Fruit fly).